Reading from the N-terminus, the 129-residue chain is Succinate dehydrogenase assembly factor 3, mitochondrial (129 aa).

It belongs to the complex I LYR family. SDHAF3 subfamily. As to quaternary structure, interacts with the iron-sulfur protein subunit within the SDH catalytic dimer.

Its subcellular location is the mitochondrion matrix. Functionally, plays an essential role in the assembly of succinate dehydrogenase (SDH), an enzyme complex (also referred to as respiratory complex II) that is a component of both the tricarboxylic acid (TCA) cycle and the mitochondrial electron transport chain, and which couples the oxidation of succinate to fumarate with the reduction of ubiquinone (coenzyme Q) to ubiquinol. Promotes maturation of the iron-sulfur protein subunit of the SDH catalytic dimer, protecting it from the deleterious effects of oxidants. May act together with SDHAF1. This chain is Succinate dehydrogenase assembly factor 3, mitochondrial, found in Aspergillus fumigatus (strain ATCC MYA-4609 / CBS 101355 / FGSC A1100 / Af293) (Neosartorya fumigata).